The chain runs to 283 residues: Probable endonuclease 4 (283 aa).

Zn(2+) is bound by residues H69, H113, E148, D182, H185, H217, D230, H232, and E262.

The protein belongs to the AP endonuclease 2 family. It depends on Zn(2+) as a cofactor.

The catalysed reaction is Endonucleolytic cleavage to 5'-phosphooligonucleotide end-products.. In terms of biological role, endonuclease IV plays a role in DNA repair. It cleaves phosphodiester bonds at apurinic or apyrimidinic (AP) sites, generating a 3'-hydroxyl group and a 5'-terminal sugar phosphate. The chain is Probable endonuclease 4 from Bifidobacterium longum (strain DJO10A).